A 50-amino-acid chain; its full sequence is Large ribosomal subunit protein bL33 (50 aa).

The protein belongs to the bacterial ribosomal protein bL33 family.

This is Large ribosomal subunit protein bL33 from Koribacter versatilis (strain Ellin345).